Here is a 326-residue protein sequence, read N- to C-terminus: Beta-ketoacyl-[acyl-carrier-protein] synthase III (326 aa).

Active-site residues include Cys116 and His253. The interval 254 to 258 (QANIR) is ACP-binding. Residue Asn283 is part of the active site.

It belongs to the thiolase-like superfamily. FabH family. Homodimer.

Its subcellular location is the cytoplasm. It carries out the reaction malonyl-[ACP] + acetyl-CoA + H(+) = 3-oxobutanoyl-[ACP] + CO2 + CoA. The protein operates within lipid metabolism; fatty acid biosynthesis. Catalyzes the condensation reaction of fatty acid synthesis by the addition to an acyl acceptor of two carbons from malonyl-ACP. Catalyzes the first condensation reaction which initiates fatty acid synthesis and may therefore play a role in governing the total rate of fatty acid production. Possesses both acetoacetyl-ACP synthase and acetyl transacylase activities. Its substrate specificity determines the biosynthesis of branched-chain and/or straight-chain of fatty acids. The polypeptide is Beta-ketoacyl-[acyl-carrier-protein] synthase III (Jannaschia sp. (strain CCS1)).